A 114-amino-acid polypeptide reads, in one-letter code: Ribulose bisphosphate carboxylase small subunit 2 (114 aa).

Belongs to the RuBisCO small chain family. As to quaternary structure, heterohexadecamer of 8 large and 8 small subunits. Forms a CsoS2-CsoS1-RuBisCO complex.

It localises to the carboxysome. Its function is as follows. RuBisCO catalyzes two reactions: the carboxylation of D-ribulose 1,5-bisphosphate, the primary event in carbon dioxide fixation, as well as the oxidative fragmentation of the pentose substrate. Both reactions occur simultaneously and in competition at the same active site. Although the small subunit is not catalytic it is essential for maximal activity. Functionally, replacing the endogenous type I ccbLS genes in H.neapolitanus with this carboxysomally targeted enzyme reconstitutes RuBisCO with about 25% of normal activity; the active enzyme is targeted to carboxysomes. The polypeptide is Ribulose bisphosphate carboxylase small subunit 2 (Hydrogenovibrio crunogenus (strain DSM 25203 / XCL-2) (Thiomicrospira crunogena)).